The sequence spans 447 residues: Clusterin (447 aa).

The first 21 residues, 1-21 (MKILLLCVALLLTWDNGMVLG), serve as a signal peptide directing secretion. Residues 77-80 (KKKK) carry the Nuclear localization signal motif. Disulfide bonds link Cys101–Cys312, Cys112–Cys304, Cys115–Cys301, Cys120–Cys294, and Cys128–Cys284. Asn102 is a glycosylation site (N-linked (GlcNAc...) asparagine). A Phosphoserine modification is found at Ser132. N-linked (GlcNAc...) asparagine glycosylation is found at Asn144, Asn290, Asn327, Asn353, and Asn373. Position 394 is a phosphoserine (Ser394). The Nuclear localization signal signature appears at 441–445 (RRKSR).

Belongs to the clusterin family. As to quaternary structure, antiparallel disulfide-linked heterodimer of an alpha chain and a beta chain. Self-associates and forms higher oligomers. Interacts with a broad range of misfolded proteins, including APP, APOC2 and LYZ. Slightly acidic pH promotes interaction with misfolded proteins. Forms high-molecular weight oligomers upon interaction with misfolded proteins. Interacts with APOA1, LRP2, CLUAP1 and PON1. Interacts with the complement membrane attack complex. Interacts (via alpha chain) with XRCC6. Interacts with SYVN1, COMMD1, BTRC, CUL1 and with ubiquitin and SCF (SKP1-CUL1-F-box protein) E3 ubiquitin-protein ligase complexes. Interacts (via alpha chain) with BAX in stressed cells, where BAX undergoes a conformation change leading to association with the mitochondrial membrane. Does not interact with BAX in unstressed cells. Found in a complex with LTF, CLU, EPPIN and SEMG1. Interacts (immaturely glycosylated pre-secreted form) with HSPA5; this interaction promotes CLU stability and facilitates stress-induced CLU retrotranslocation from the secretory pathway to the mitochondria, thereby reducing stress-induced apoptosis by stabilizing mitochondrial membrane integrity. Interacts with BCL2L1; this interaction releases and activates BAX and promotes cell death. Interacts with TGFBR2 and ACVR1. Interacts (secreted form) with STMN3; this interaction may act as an important modulator during neuronal differentiation. Interacts with VLDLR and LRP8. Proteolytically cleaved on its way through the secretory system, probably within the Golgi lumen. Proteolytic cleavage is not necessary for its chaperone activity. All non-secreted forms are not proteolytically cleaved. Chaperone activity of uncleaved forms is dependent on a non-reducing environment. Post-translationally, polyubiquitinated, leading to proteasomal degradation. Under cellular stress, the intracellular level of cleaved form is reduced due to proteasomal degradation. In terms of processing, extensively glycosylated with sulfated N-linked carbohydrates. About 30% of the protein mass is comprised of complex N-linked carbohydrate. Endoplasmic reticulum (ER) stress induces changes in glycosylation status and increases level of hypoglycosylated forms. Core carbohydrates are essential for chaperone activity. Non-secreted forms are hypoglycosylated or unglycosylated. As to expression, detected in Sertoli cells (at protein level). Detected in cultured Sertoli cells, testis, epididymis, liver and brain.

It localises to the secreted. The protein resides in the nucleus. Its subcellular location is the cytoplasm. The protein localises to the mitochondrion membrane. It is found in the cytosol. It localises to the microsome. The protein resides in the endoplasmic reticulum. Its subcellular location is the mitochondrion. The protein localises to the perinuclear region. It is found in the cytoplasmic vesicle. It localises to the secretory vesicle. The protein resides in the chromaffin granule. Functionally, functions as extracellular chaperone that prevents aggregation of non native proteins. Prevents stress-induced aggregation of blood plasma proteins. Inhibits formation of amyloid fibrils by APP, APOC2, B2M, CALCA, CSN3, SNCA and aggregation-prone LYZ variants (in vitro). Does not require ATP. Maintains partially unfolded proteins in a state appropriate for subsequent refolding by other chaperones, such as HSPA8/HSC70. Does not refold proteins by itself. Binding to cell surface receptors triggers internalization of the chaperone-client complex and subsequent lysosomal or proteasomal degradation. When secreted, protects cells against apoptosis and against cytolysis by complement: inhibits assembly of the complement membrane attack complex (MAC) by preventing polymerization of C9 pore component of the MAC complex. Intracellular forms interact with ubiquitin and SCF (SKP1-CUL1-F-box protein) E3 ubiquitin-protein ligase complexes and promote the ubiquitination and subsequent proteasomal degradation of target proteins. Promotes proteasomal degradation of COMMD1 and IKBKB. Modulates NF-kappa-B transcriptional activity. Following stress, promotes apoptosis. Inhibits apoptosis when associated with the mitochondrial membrane by interference with BAX-dependent release of cytochrome c into the cytoplasm. Plays a role in the regulation of cell proliferation. An intracellular form suppresses stress-induced apoptosis by stabilizing mitochondrial membrane integrity through interaction with HSPA5. Secreted form does not affect caspase or BAX-mediated intrinsic apoptosis and TNF-induced NF-kappa-B-activity. Secreted form act as an important modulator during neuronal differentiation through interaction with STMN3. Plays a role in the clearance of immune complexes that arise during cell injury. The sequence is that of Clusterin from Rattus norvegicus (Rat).